A 536-amino-acid chain; its full sequence is Nuclear hormone receptor family member nhr-7 (536 aa).

The segment at residues 6–82 (NRICAVCGDT…VGMNPDYVRP (77 aa)) is a DNA-binding region (nuclear receptor). 2 NR C4-type zinc fingers span residues 9 to 29 (CAVC…CFGC) and 46 to 70 (CRFE…FRKC). The NR LBD domain maps to 155–378 (ADRSLARKTG…PFHKILTDII (224 aa)). The disordered stretch occupies residues 427-465 (SPCQISAPPPPQQQYTDYSQMPSTSSYPANSSPFQSPYR). Residues 439–465 (QQYTDYSQMPSTSSYPANSSPFQSPYR) are compositionally biased toward polar residues.

The protein belongs to the nuclear hormone receptor family.

The protein localises to the nucleus. Functionally, orphan nuclear receptor. The polypeptide is Nuclear hormone receptor family member nhr-7 (nhr-7) (Caenorhabditis elegans).